Reading from the N-terminus, the 155-residue chain is Trypsin/factor XIIA inhibitor (155 aa).

An N-terminal signal peptide occupies residues 1–28; that stretch reads MASSSSSSHRRLILAAAVLLSVLAAASA. Cystine bridges form between Cys34-Cys83, Cys48-Cys72, Cys57-Cys114, Cys73-Cys132, and Cys85-Cys143. Arg62 is a catalytic residue. A propeptide spans 139–155 (C-terminal peptide); it reads GVAECPWILGGGTMPSK.

The protein belongs to the protease inhibitor I6 (cereal trypsin/alpha-amylase inhibitor) family. As to quaternary structure, monomer.

The protein localises to the secreted. Functionally, potent inhibitor of mammalian trypsin and a specific inhibitor of factor XIIa (activated hageman factor). This Zea mays (Maize) protein is Trypsin/factor XIIA inhibitor.